Consider the following 326-residue polypeptide: Ribose-phosphate pyrophosphokinase (326 aa).

Residues 45–47 (NGE) and 104–105 (RQ) contribute to the ATP site. Residues His138 and Asp178 each coordinate Mg(2+). Lys202 is an active-site residue. Residues Arg204, Asp230, and 234-238 (DTGGT) contribute to the D-ribose 5-phosphate site.

Belongs to the ribose-phosphate pyrophosphokinase family. Class I subfamily. In terms of assembly, homohexamer. Mg(2+) serves as cofactor.

It localises to the cytoplasm. The catalysed reaction is D-ribose 5-phosphate + ATP = 5-phospho-alpha-D-ribose 1-diphosphate + AMP + H(+). It participates in metabolic intermediate biosynthesis; 5-phospho-alpha-D-ribose 1-diphosphate biosynthesis; 5-phospho-alpha-D-ribose 1-diphosphate from D-ribose 5-phosphate (route I): step 1/1. Functionally, involved in the biosynthesis of the central metabolite phospho-alpha-D-ribosyl-1-pyrophosphate (PRPP) via the transfer of pyrophosphoryl group from ATP to 1-hydroxyl of ribose-5-phosphate (Rib-5-P). The polypeptide is Ribose-phosphate pyrophosphokinase (Mycobacterium bovis (strain ATCC BAA-935 / AF2122/97)).